Here is a 120-residue protein sequence, read N- to C-terminus: Ribonuclease P protein component 2 (120 aa).

The protein belongs to the eukaryotic/archaeal RNase P protein component 2 family. As to quaternary structure, consists of a catalytic RNA component and at least 4-5 protein subunits.

The protein localises to the cytoplasm. The enzyme catalyses Endonucleolytic cleavage of RNA, removing 5'-extranucleotides from tRNA precursor.. Its function is as follows. Part of ribonuclease P, a protein complex that generates mature tRNA molecules by cleaving their 5'-ends. The chain is Ribonuclease P protein component 2 from Methanobrevibacter smithii (strain ATCC 35061 / DSM 861 / OCM 144 / PS).